We begin with the raw amino-acid sequence, 454 residues long: Histidine--tRNA ligase (454 aa).

This sequence belongs to the class-II aminoacyl-tRNA synthetase family. In terms of assembly, homodimer.

The protein localises to the cytoplasm. It catalyses the reaction tRNA(His) + L-histidine + ATP = L-histidyl-tRNA(His) + AMP + diphosphate + H(+). In Bacteroides fragilis (strain YCH46), this protein is Histidine--tRNA ligase.